A 23-amino-acid polypeptide reads, in one-letter code: Alyteserin-1c (23 aa).

S23 carries the post-translational modification Serine amide.

In terms of tissue distribution, expressed by the skin glands.

It localises to the secreted. The protein localises to the target cell membrane. In terms of biological role, antibacterial peptide with amphipathic alpha-helical structure that shows selective growth-inhibitory activity against Gram-negative bacteria but low hemolytic activity against human erythrocytes (LC(50)=145-220 uM). It is moderately active against the Gram-negative bacteria E.coli (MIC=25 uM), K.pneumoniae (MIC=50 uM), P.aeruginosa (MIC=25 uM), A.baumannii (MIC=6 uM), and is weaky active against the Gram-positive S.aureus (MIC=100-250 uM). The polypeptide is Alyteserin-1c (Alytes obstetricans (Common midwife toad)).